The chain runs to 161 residues: DNA-directed RNA polymerase 18 kDa subunit (161 aa).

This sequence belongs to the poxviridae DNA-directed RNA polymerase 18 kDa subunit family. As to quaternary structure, the DNA-dependent RNA polymerase used for intermediate and late genes expression consists of eight subunits Rpo30/OPG66, Rpo7/OPG90, Rpo22/OPG103, Rpo147/OPG105, Rpo18/OPG119, Rpo19/OPG131, Rpo132/OPG151 and Rpo35/OPG156. The same holoenzyme, with the addition of the transcription-specificity factor OPG109, is used for early gene expression. Post-translationally, apparently non-glycosylated.

It localises to the virion. The catalysed reaction is RNA(n) + a ribonucleoside 5'-triphosphate = RNA(n+1) + diphosphate. Functionally, part of the DNA-dependent RNA polymerase which catalyzes the transcription of viral DNA into RNA using the four ribonucleoside triphosphates as substrates. Responsible for the transcription of early, intermediate and late genes. DNA-dependent RNA polymerase associates with the early transcription factor (ETF), itself composed of OPG118 and OPG133, thereby allowing the early genes transcription. Late transcription, and probably also intermediate transcription, require newly synthesized RNA polymerase. The chain is DNA-directed RNA polymerase 18 kDa subunit (OPG119) from Cynomys gunnisoni (Gunnison's prairie dog).